The chain runs to 1154 residues: BEACH domain-containing protein lvsF (1154 aa).

Disordered regions lie at residues 92–123 and 139–167; these read HLPTPQPIPQSILSPSKPTPTPTPPIVVEQPS and TSKVTTPTPPTPTPTPPTPQPTSIAPTPT. The span at 145–158 shows a compositional bias: pro residues; the sequence is PTPPTPTPTPPTPQ. The region spanning 289–384 is the BEACH-type PH domain; the sequence is DMNERNILEL…TRNQVYDLLV (96 aa). The BEACH domain maps to 389–697; sequence TNIMHINEQA…QIFKTPHPQR (309 aa). Disordered stretches follow at residues 554 to 575, 739 to 762, and 779 to 825; these read SFESSSSSRNGGGGDDDDNFEN, NNLNNNNNNNNNNNSNSNSNLNNN, and NSLN…ENLN. 2 stretches are compositionally biased toward low complexity: residues 779-788 and 795-822; these read NSLNNENNEN and NSNSNSSDNIKNSNGFENNDNNFNNENE. 7 WD repeats span residues 858 to 897, 900 to 939, 942 to 980, 992 to 1031, 1034 to 1074, 1076 to 1110, and 1119 to 1154; these read LHKDKISALYLSNNSETIYSVSLDSCLKIYSLKEKRQIRS, LCNLALSSFQLSKDEKYIIIGSWDNNIYVYSVGNGSISYS, GHSDAVSCLKLHNNNILVSGSWDSSVKVWRTHRQSNGAI, DSDTEIRSIDISSNGTIFCAGSSDGYLYFYDLLTLQLIRR, CFFD…FSFK, KGEIHCLDSDGSSLIIGTDRGLCLWSLTTGTEIKD, and SSNESIHSLNVSINQSSNKPILLTGTEAGSISIWQQ.

This is BEACH domain-containing protein lvsF (lvsF) from Dictyostelium discoideum (Social amoeba).